Reading from the N-terminus, the 510-residue chain is L-2,4-diaminobutyrate decarboxylase (510 aa).

N6-(pyridoxal phosphate)lysine is present on Lys-319.

It belongs to the group II decarboxylase family. Pyridoxal 5'-phosphate is required as a cofactor.

It catalyses the reaction L-2,4-diaminobutanoate + H(+) = propane-1,3-diamine + CO2. Its pathway is amine and polyamine biosynthesis; 1,3-diaminopropane biosynthesis; 1,3-diaminopropane from L-aspartate 4-semialdehyde: step 2/2. The protein is L-2,4-diaminobutyrate decarboxylase (ddc) of Acinetobacter baumannii.